A 386-amino-acid polypeptide reads, in one-letter code: Succinate--CoA ligase [ADP-forming] subunit beta (386 aa).

Residues 9 to 244 (KELLRDYGVP…LNEEDEKEIE (236 aa)) enclose the ATP-grasp domain. ATP-binding positions include Lys-46, 53–55 (GRG), Glu-99, Cys-102, and Glu-107. Residues Asn-199 and Asp-213 each coordinate Mg(2+). Residues Asn-264 and 321–323 (GIM) each bind substrate.

The protein belongs to the succinate/malate CoA ligase beta subunit family. Heterotetramer of two alpha and two beta subunits. Mg(2+) serves as cofactor.

It carries out the reaction succinate + ATP + CoA = succinyl-CoA + ADP + phosphate. The catalysed reaction is GTP + succinate + CoA = succinyl-CoA + GDP + phosphate. The protein operates within carbohydrate metabolism; tricarboxylic acid cycle; succinate from succinyl-CoA (ligase route): step 1/1. Succinyl-CoA synthetase functions in the citric acid cycle (TCA), coupling the hydrolysis of succinyl-CoA to the synthesis of either ATP or GTP and thus represents the only step of substrate-level phosphorylation in the TCA. The beta subunit provides nucleotide specificity of the enzyme and binds the substrate succinate, while the binding sites for coenzyme A and phosphate are found in the alpha subunit. The chain is Succinate--CoA ligase [ADP-forming] subunit beta from Alkaliphilus oremlandii (strain OhILAs) (Clostridium oremlandii (strain OhILAs)).